The following is a 130-amino-acid chain: Small ribosomal subunit protein uS8 (130 aa).

It belongs to the universal ribosomal protein uS8 family. In terms of assembly, part of the 30S ribosomal subunit. Contacts proteins S5 and S12.

One of the primary rRNA binding proteins, it binds directly to 16S rRNA central domain where it helps coordinate assembly of the platform of the 30S subunit. This chain is Small ribosomal subunit protein uS8, found in Shewanella piezotolerans (strain WP3 / JCM 13877).